The following is a 501-amino-acid chain: CaM kinase-like vesicle-associated protein (501 aa).

A Protein kinase domain is found at 24 to 286 (YDLGQVIKTE…AEEAISHEWI (263 aa)). The tract at residues 327 to 501 (RAPEQSSTAA…AQESQREEAS (175 aa)) is disordered. A compositionally biased stretch (low complexity) spans 331 to 365 (QSSTAAAQSASATDTATPGAAGGATAAAASGATSA). Residues 387 to 428 (TPATDGSATPATDGSVTPATDGSITPATDGSVTPATDRSATP) show a composition bias toward polar residues. At threonine 435 the chain carries Phosphothreonine. Positions 438–451 (TEESTVPTTQSSAM) are enriched in polar residues. A Phosphothreonine modification is found at threonine 459.

The protein belongs to the protein kinase superfamily. CAMK Ser/Thr protein kinase family. In terms of assembly, interacts with calmodulin, in the presence of calcium. It depends on Ca(2+) as a cofactor.

It is found in the cell membrane. Its subcellular location is the cytoplasmic vesicle membrane. In terms of biological role, does not appear to have detectable kinase activity. The polypeptide is CaM kinase-like vesicle-associated protein (CAMKV) (Homo sapiens (Human)).